The following is a 443-amino-acid chain: Xaa-Pro dipeptidase (443 aa).

5 residues coordinate Mn(2+): aspartate 246, aspartate 257, histidine 339, glutamate 384, and glutamate 423.

The protein belongs to the peptidase M24B family. Bacterial-type prolidase subfamily. Mn(2+) serves as cofactor.

The catalysed reaction is Xaa-L-Pro dipeptide + H2O = an L-alpha-amino acid + L-proline. Its function is as follows. Splits dipeptides with a prolyl residue in the C-terminal position. The chain is Xaa-Pro dipeptidase from Salmonella choleraesuis (strain SC-B67).